Reading from the N-terminus, the 466-residue chain is Putative proline/betaine transporter (466 aa).

A run of 12 helical transmembrane segments spans residues 20–42 (VVAT…YTTA), 63–83 (FAAL…FGII), 91–111 (VVLT…GLLP), 116–136 (IGLW…FSTG), 164–184 (IGTL…TFFL), 191–211 (SFGW…GLYL), 239–259 (IIRF…FFNV), 285–305 (VLIT…GKLA), 313–332 (VFLI…FMLL), 337–354 (FVVI…LSTY), 377–397 (VTFN…ATWL), and 405–425 (LAPA…ITFL).

It belongs to the major facilitator superfamily. Metabolite:H+ Symporter (MHS) family (TC 2.A.1.6) family.

The protein localises to the cell membrane. May be a proton symporter involved in the uptake of osmolytes such as proline and glycine betaine. The protein is Putative proline/betaine transporter (proP) of Staphylococcus aureus (strain MSSA476).